We begin with the raw amino-acid sequence, 152 residues long: CASP-like protein 5C1 (152 aa).

Over 1–12 (MVRTTASFGTSS) the chain is Cytoplasmic. A helical membrane pass occupies residues 13–33 (SFVLRLGQTLFSSASLLFMCF). Over 34 to 44 (NDDEDFYAYTT) the chain is Extracellular. The chain crosses the membrane as a helical span at residues 45-65 (FCYLVTVMGLVTPWSVTLALM). The Cytoplasmic segment spans residues 66–80 (EAYSILVKKLPMQAT). The chain crosses the membrane as a helical span at residues 81-101 (VISVIVAGDFVLSFLSLGGAC). Residues 102-126 (STASVAVLLMDAGEKQCDRYKLSAT) are Extracellular-facing. The chain crosses the membrane as a helical span at residues 127-147 (MAFLSSFLSFASTFFNFCLLP). The Cytoplasmic segment spans residues 148–152 (SLMSH).

It belongs to the Casparian strip membrane proteins (CASP) family. In terms of assembly, homodimer and heterodimers.

The protein localises to the cell membrane. The sequence is that of CASP-like protein 5C1 from Arabidopsis thaliana (Mouse-ear cress).